The chain runs to 503 residues: Glutamate/gamma-aminobutyrate antiporter (503 aa).

33–43 (LHLVFFLLLGG) serves as a coordination point for L-glutamate. The next 7 helical transmembrane spans lie at 35 to 55 (LVFF…LCAA), 153 to 173 (FVVG…AYFI), 194 to 214 (VSTL…EASA), 232 to 252 (ILLV…VAAV), 366 to 386 (LTVV…FVLI), 407 to 427 (IIAG…FVPP), and 440 to 460 (MILL…YELH).

This sequence belongs to the amino acid-polyamine-organocation (APC) superfamily. Glutamate:GABA antiporter (GGA) (TC 2.A.3.7) family.

The protein resides in the cell membrane. The enzyme catalyses 4-aminobutanoate(in) + L-glutamate(out) = 4-aminobutanoate(out) + L-glutamate(in). Its function is as follows. Involved in glutaminase-dependent acid resistance. Exchanges extracellular glutamate (Glu) for intracellular gamma-aminobutyric acid (GABA) under acidic conditions. The protein is Glutamate/gamma-aminobutyrate antiporter (gadC) of Lactococcus lactis subsp. lactis (strain IL1403) (Streptococcus lactis).